Here is a 66-residue protein sequence, read N- to C-terminus: Neurotoxin-like protein STR1 (66 aa).

The 64-residue stretch at 2-65 (RDGYIVHDGT…VWGEDGFMCW (64 aa)) folds into the LCN-type CS-alpha/beta domain. Cystine bridges form between cysteine 13-cysteine 64, cysteine 17-cysteine 40, cysteine 26-cysteine 45, and cysteine 30-cysteine 47.

It belongs to the long (4 C-C) scorpion toxin superfamily. Sodium channel inhibitor family. Beta subfamily. As to expression, expressed by the venom gland.

It localises to the secreted. Its function is as follows. This protein is not toxic. This Androctonus australis (Sahara scorpion) protein is Neurotoxin-like protein STR1.